The primary structure comprises 370 residues: Protein Wnt-1 (370 aa).

An N-terminal signal peptide occupies residues 1-19 (MRVLALLLAVKAACVLLVS). Asn-28 carries an N-linked (GlcNAc...) asparagine glycan. Cystine bridges form between Cys-92–Cys-103, Cys-142–Cys-150, Cys-152–Cys-169, Cys-217–Cys-231, and Cys-219–Cys-226. Residue Ser-223 is the site of O-palmitoleoyl serine; by PORCN attachment. Positions 261–282 (GSNRASHRADPRHLEPENPAHK) are disordered. A compositionally biased stretch (basic and acidic residues) spans 267–280 (HRADPRHLEPENPA). Intrachain disulfides connect Cys-299–Cys-330, Cys-315–Cys-325, Cys-329–Cys-369, Cys-345–Cys-360, Cys-347–Cys-357, and Cys-352–Cys-353. Residue Asn-316 is glycosylated (N-linked (GlcNAc...) asparagine). N-linked (GlcNAc...) asparagine glycosylation occurs at Asn-359.

This sequence belongs to the Wnt family. Post-translationally, palmitoleoylation is required for efficient binding to frizzled receptors. Palmitoleoylation is necessary for proper trafficking to cell surface. Depalmitoleoylated by NOTUM, leading to inhibit Wnt signaling pathway.

The protein localises to the secreted. The protein resides in the extracellular space. Its subcellular location is the extracellular matrix. Ligand for members of the frizzled family of seven transmembrane receptors. Acts in the canonical Wnt signaling pathway by promoting beta-catenin-dependent transcriptional activation. Involved in neurogenesis. Performs a partially redundant function with wnt10b in the formation of the midbrain-hindbrain boundary (MHB) organizer. In the hindbrain, mediates lateral inhibition of boundary cell specification, probably via up-regulation of proneural and Delta gene expression in non-boundary cells; localized expression of wnt1 in boundary cells is maintained via rfng-mediated modulation of Notch activity. In Danio rerio (Zebrafish), this protein is Protein Wnt-1 (wnt1).